We begin with the raw amino-acid sequence, 114 residues long: Iron-sulfur cluster insertion protein ErpA (114 aa).

Iron-sulfur cluster contacts are provided by cysteine 42, cysteine 106, and cysteine 108.

Belongs to the HesB/IscA family. Homodimer. Requires iron-sulfur cluster as cofactor.

Its function is as follows. Required for insertion of 4Fe-4S clusters for at least IspG. The protein is Iron-sulfur cluster insertion protein ErpA of Erwinia tasmaniensis (strain DSM 17950 / CFBP 7177 / CIP 109463 / NCPPB 4357 / Et1/99).